Reading from the N-terminus, the 299-residue chain is GTPase Era (299 aa).

The region spanning 5-172 (KSGFVSIIGR…IDVLKTYLPE (168 aa)) is the Era-type G domain. The tract at residues 13-20 (GRPNVGKS) is G1. 13-20 (GRPNVGKS) is a GTP binding site. The interval 39-43 (QTTRN) is G2. The segment at 60 to 63 (DTPG) is G3. GTP contacts are provided by residues 60–64 (DTPGI) and 122–125 (NKID). Positions 122–125 (NKID) are G4. The tract at residues 151 to 153 (ISA) is G5. The region spanning 203-280 (TSEEIPHAIG…YLELWVKVQR (78 aa)) is the KH type-2 domain.

Belongs to the TRAFAC class TrmE-Era-EngA-EngB-Septin-like GTPase superfamily. Era GTPase family. As to quaternary structure, monomer.

It is found in the cytoplasm. The protein localises to the cell membrane. An essential GTPase that binds both GDP and GTP, with rapid nucleotide exchange. Plays a role in 16S rRNA processing and 30S ribosomal subunit biogenesis and possibly also in cell cycle regulation and energy metabolism. The protein is GTPase Era of Staphylococcus aureus (strain bovine RF122 / ET3-1).